The sequence spans 222 residues: UPF0758 protein YPN_3801 (222 aa).

The region spanning 100 to 222 (VLLNPGITQK…CVSFAERGWL (123 aa)) is the MPN domain. Positions 171, 173, and 184 each coordinate Zn(2+). Residues 171–184 (HNHPSGKAEPSQAD) carry the JAMM motif motif.

The protein belongs to the UPF0758 family. YicR subfamily.

In Yersinia pestis bv. Antiqua (strain Nepal516), this protein is UPF0758 protein YPN_3801.